The following is a 502-amino-acid chain: Probable cytosol aminopeptidase (502 aa).

Residues Lys254 and Asp259 each contribute to the Mn(2+) site. Residue Lys266 is part of the active site. 3 residues coordinate Mn(2+): Asp277, Asp336, and Glu338. Arg340 is an active-site residue.

This sequence belongs to the peptidase M17 family. It depends on Mn(2+) as a cofactor.

It localises to the cytoplasm. The catalysed reaction is Release of an N-terminal amino acid, Xaa-|-Yaa-, in which Xaa is preferably Leu, but may be other amino acids including Pro although not Arg or Lys, and Yaa may be Pro. Amino acid amides and methyl esters are also readily hydrolyzed, but rates on arylamides are exceedingly low.. The enzyme catalyses Release of an N-terminal amino acid, preferentially leucine, but not glutamic or aspartic acids.. Presumably involved in the processing and regular turnover of intracellular proteins. Catalyzes the removal of unsubstituted N-terminal amino acids from various peptides. The chain is Probable cytosol aminopeptidase from Tropheryma whipplei (strain TW08/27) (Whipple's bacillus).